A 57-amino-acid chain; its full sequence is Large ribosomal subunit protein bL32 (57 aa).

The disordered stretch occupies residues 1-22; it reads MAVPKKKTSKSKRDKRRATWRH.

Belongs to the bacterial ribosomal protein bL32 family.

The sequence is that of Large ribosomal subunit protein bL32 from Nostoc punctiforme (strain ATCC 29133 / PCC 73102).